A 188-amino-acid polypeptide reads, in one-letter code: Elongation factor P-like protein (188 aa).

Belongs to the elongation factor P family.

This Aliivibrio fischeri (strain MJ11) (Vibrio fischeri) protein is Elongation factor P-like protein.